A 98-amino-acid chain; its full sequence is N(2)-fixation sustaining protein CowN (98 aa).

Belongs to the CowN family.

In terms of biological role, is required to sustain N(2)-dependent growth in the presence of low levels of carbon monoxide (CO). Probably acts by protecting the N(2) fixation ability of the nitrogenase complex, which is inactivated in the presence of CO. The sequence is that of N(2)-fixation sustaining protein CowN from Dechloromonas aromatica (strain RCB).